The following is a 957-amino-acid chain: Glycine dehydrogenase (decarboxylating) (957 aa).

Position 708 is an N6-(pyridoxal phosphate)lysine (K708).

This sequence belongs to the GcvP family. As to quaternary structure, the glycine cleavage system is composed of four proteins: P, T, L and H. Pyridoxal 5'-phosphate serves as cofactor.

It catalyses the reaction N(6)-[(R)-lipoyl]-L-lysyl-[glycine-cleavage complex H protein] + glycine + H(+) = N(6)-[(R)-S(8)-aminomethyldihydrolipoyl]-L-lysyl-[glycine-cleavage complex H protein] + CO2. Its function is as follows. The glycine cleavage system catalyzes the degradation of glycine. The P protein binds the alpha-amino group of glycine through its pyridoxal phosphate cofactor; CO(2) is released and the remaining methylamine moiety is then transferred to the lipoamide cofactor of the H protein. This chain is Glycine dehydrogenase (decarboxylating), found in Escherichia coli O17:K52:H18 (strain UMN026 / ExPEC).